The primary structure comprises 172 residues: RNA silencing suppressor p19 (172 aa).

The segment covering 1–15 (MERAIQGNDAREQAY) has biased composition (basic and acidic residues). The segment at 1-38 (MERAIQGNDAREQAYGERWNGGPGGSTSPFQLPDESPS) is disordered.

The protein belongs to the tombusvirus protein p19 family. Homodimer.

Its function is as follows. Viral suppressor of RNA silencing which binds specifically to silencing RNAs (siRNAs). Acts as a molecular caliper to specifically select siRNAs based on the length of the duplex region of the RNA. The protein is RNA silencing suppressor p19 of Tomato bushy stunt virus (strain A23) (TBSV).